A 75-amino-acid polypeptide reads, in one-letter code: Exodeoxyribonuclease 7 small subunit (75 aa).

This sequence belongs to the XseB family. In terms of assembly, heterooligomer composed of large and small subunits.

It is found in the cytoplasm. The enzyme catalyses Exonucleolytic cleavage in either 5'- to 3'- or 3'- to 5'-direction to yield nucleoside 5'-phosphates.. In terms of biological role, bidirectionally degrades single-stranded DNA into large acid-insoluble oligonucleotides, which are then degraded further into small acid-soluble oligonucleotides. The polypeptide is Exodeoxyribonuclease 7 small subunit (Chlamydia caviae (strain ATCC VR-813 / DSM 19441 / 03DC25 / GPIC) (Chlamydophila caviae)).